The chain runs to 275 residues: 4-hydroxy-tetrahydrodipicolinate reductase (275 aa).

12–17 serves as a coordination point for NAD(+); that stretch reads GAAGRM. Residue Arg39 coordinates NADP(+). NAD(+)-binding positions include 102-104 and 126-129; these read GTT and SGNM. His160 acts as the Proton donor/acceptor in catalysis. His161 provides a ligand contact to (S)-2,3,4,5-tetrahydrodipicolinate. Lys164 (proton donor) is an active-site residue. 170 to 171 is a binding site for (S)-2,3,4,5-tetrahydrodipicolinate; that stretch reads GT.

Belongs to the DapB family.

It localises to the cytoplasm. The enzyme catalyses (S)-2,3,4,5-tetrahydrodipicolinate + NAD(+) + H2O = (2S,4S)-4-hydroxy-2,3,4,5-tetrahydrodipicolinate + NADH + H(+). It carries out the reaction (S)-2,3,4,5-tetrahydrodipicolinate + NADP(+) + H2O = (2S,4S)-4-hydroxy-2,3,4,5-tetrahydrodipicolinate + NADPH + H(+). It participates in amino-acid biosynthesis; L-lysine biosynthesis via DAP pathway; (S)-tetrahydrodipicolinate from L-aspartate: step 4/4. In terms of biological role, catalyzes the conversion of 4-hydroxy-tetrahydrodipicolinate (HTPA) to tetrahydrodipicolinate. The polypeptide is 4-hydroxy-tetrahydrodipicolinate reductase (Agrobacterium fabrum (strain C58 / ATCC 33970) (Agrobacterium tumefaciens (strain C58))).